A 59-amino-acid chain; its full sequence is Large ribosomal subunit protein bL32 (59 aa).

The disordered stretch occupies residues 1-59; it reads MAVQQNRKTPSKRGMRRSHDSLSKPTLSTEQNTGETHRRHHISADGYYRGRKVTRGQDD. The segment covering 23–34 has biased composition (polar residues); the sequence is SKPTLSTEQNTG. The span at 49 to 59 shows a compositional bias: basic residues; that stretch reads RGRKVTRGQDD.

The protein belongs to the bacterial ribosomal protein bL32 family.

The chain is Large ribosomal subunit protein bL32 from Halorhodospira halophila (strain DSM 244 / SL1) (Ectothiorhodospira halophila (strain DSM 244 / SL1)).